The sequence spans 443 residues: ATP-dependent protease ATPase subunit HslU (443 aa).

ATP is bound by residues I18, 60–65, D256, E321, and R393; that span reads GVGKTE.

Belongs to the ClpX chaperone family. HslU subfamily. As to quaternary structure, a double ring-shaped homohexamer of HslV is capped on each side by a ring-shaped HslU homohexamer. The assembly of the HslU/HslV complex is dependent on binding of ATP.

It localises to the cytoplasm. ATPase subunit of a proteasome-like degradation complex; this subunit has chaperone activity. The binding of ATP and its subsequent hydrolysis by HslU are essential for unfolding of protein substrates subsequently hydrolyzed by HslV. HslU recognizes the N-terminal part of its protein substrates and unfolds these before they are guided to HslV for hydrolysis. In Citrobacter koseri (strain ATCC BAA-895 / CDC 4225-83 / SGSC4696), this protein is ATP-dependent protease ATPase subunit HslU.